The following is a 171-amino-acid chain: Co-chaperone protein HscB homolog (171 aa).

A J domain is found at 2-74; it reads NHFELFGLPS…ISRAEYILAE (73 aa).

Belongs to the HscB family. In terms of assembly, interacts with HscA and stimulates its ATPase activity.

Co-chaperone involved in the maturation of iron-sulfur cluster-containing proteins. Seems to help targeting proteins to be folded toward HscA. The polypeptide is Co-chaperone protein HscB homolog (Vibrio campbellii (strain ATCC BAA-1116)).